Consider the following 123-residue polypeptide: Large ribosomal subunit protein uL29 (123 aa).

This sequence belongs to the universal ribosomal protein uL29 family. Component of the large ribosomal subunit.

Its subcellular location is the cytoplasm. In terms of biological role, component of the large ribosomal subunit. The ribosome is a large ribonucleoprotein complex responsible for the synthesis of proteins in the cell. Plays an essential role in early embryonic development. May act as a haploinsufficient tumor suppressor. This Danio rerio (Zebrafish) protein is Large ribosomal subunit protein uL29 (rpl35).